Reading from the N-terminus, the 516-residue chain is Serine carboxypeptidase-like 49 (516 aa).

The N-terminal stretch at 1–22 is a signal peptide; sequence MEKLTFLSLLLHFVVFIASTIP. A propeptide spanning residues 23–82 is cleaved from the precursor; it reads SSSFLLNDRTFERSNLPSTRAEKLIRELNLFPQQDLNVIDVADLPLTAAEGPGIVERKFV. 3 cysteine pairs are disulfide-bonded: cysteine 139–cysteine 379, cysteine 307–cysteine 322, and cysteine 345–cysteine 350. A glycan (N-linked (GlcNAc...) asparagine) is linked at asparagine 157. Serine 229 is a catalytic residue. Residue aspartate 417 is part of the active site. Cysteine 420 contributes to the substrate binding site. Residue histidine 474 is part of the active site.

It belongs to the peptidase S10 family. Expressed in roots, senescent leaves and flowers.

It localises to the secreted. In terms of biological role, probable carboxypeptidase. This is Serine carboxypeptidase-like 49 (SCPL49) from Arabidopsis thaliana (Mouse-ear cress).